The sequence spans 366 residues: Carbamoyl phosphate synthase small chain (366 aa).

The segment at 1–171 (MLEKRYLVLE…KTPYVSTGSD (171 aa)) is CPSase. Ser-47, Gly-221, and Gly-223 together coordinate L-glutamine. One can recognise a Glutamine amidotransferase type-1 domain in the interval 173–360 (SVVLLDFGKK…IAMMKDFKEK (188 aa)). Cys-248 functions as the Nucleophile in the catalytic mechanism. L-glutamine is bound by residues Leu-249, Gln-252, Asn-290, Gly-292, and Tyr-293. Catalysis depends on residues His-333 and Glu-335.

The protein belongs to the CarA family. Composed of two chains; the small (or glutamine) chain promotes the hydrolysis of glutamine to ammonia, which is used by the large (or ammonia) chain to synthesize carbamoyl phosphate. Tetramer of heterodimers (alpha,beta)4.

It catalyses the reaction hydrogencarbonate + L-glutamine + 2 ATP + H2O = carbamoyl phosphate + L-glutamate + 2 ADP + phosphate + 2 H(+). The enzyme catalyses L-glutamine + H2O = L-glutamate + NH4(+). Its pathway is amino-acid biosynthesis; L-arginine biosynthesis; carbamoyl phosphate from bicarbonate: step 1/1. It participates in pyrimidine metabolism; UMP biosynthesis via de novo pathway; (S)-dihydroorotate from bicarbonate: step 1/3. Functionally, small subunit of the glutamine-dependent carbamoyl phosphate synthetase (CPSase). CPSase catalyzes the formation of carbamoyl phosphate from the ammonia moiety of glutamine, carbonate, and phosphate donated by ATP, constituting the first step of 2 biosynthetic pathways, one leading to arginine and/or urea and the other to pyrimidine nucleotides. The small subunit (glutamine amidotransferase) binds and cleaves glutamine to supply the large subunit with the substrate ammonia. The polypeptide is Carbamoyl phosphate synthase small chain (Staphylococcus epidermidis (strain ATCC 12228 / FDA PCI 1200)).